A 317-amino-acid chain; its full sequence is Transmembrane and death domain protein 1 (317 aa).

The signal sequence occupies residues 1-27 (MAARTLASALVLTLWVWALAPAGAVDA). Over 28 to 218 (MGPHAAVRLA…ERSPMGWAGP (191 aa)) the chain is Extracellular. A compositionally biased stretch (basic and acidic residues) spans 62 to 73 (ELSRLSEDRLAR). Residues 62–106 (ELSRLSEDRLARPEPLNTTSGSPSRRRRREAAEDPAGRVAGPGEV) are disordered. Residues 66–150 (LSEDRLARPE…DVARELGKNL (85 aa)) form the Death domain. Asn-78 carries N-linked (GlcNAc...) asparagine glycosylation. A helical membrane pass occupies residues 219–239 (LALGLLTGFVGALGTGALVVL). Residues 240–317 (LTLWITGGDG…SWGSGALDGL (78 aa)) are Cytoplasmic-facing.

The protein resides in the membrane. This is Transmembrane and death domain protein 1 from Homo sapiens (Human).